The sequence spans 670 residues: DNA topoisomerase 6 subunit B (670 aa).

The disordered stretch occupies residues 1–30; that stretch reads MAGDDLVETKKGSSKNSKDSNESKLKQKSP. Basic and acidic residues predominate over residues 7–25; that stretch reads VETKKGSSKNSKDSNESKL. Residues Asn60, Asp160, 181 to 182, 190 to 197, and Lys516 contribute to the ATP site; these read TK and GKFGLGAK.

It belongs to the TOP6B family. Homodimer. Heterotetramer of two TOP6A and two TOP6B subunits. Interacts with SPO11-2, but not with SPO11-1, RHL1 or BIN4. Highly expressed in leaves, stems, flowers and seedlings.

It localises to the nucleus. It carries out the reaction ATP-dependent breakage, passage and rejoining of double-stranded DNA.. In terms of biological role, component of the DNA topoisomerase VI involved in chromatin organization and progression of endoreduplication cycles. Relaxes both positive and negative superturns and exhibits a strong decatenase activity. The B subunit binds ATP. Involved in cell-elongation processes. This is DNA topoisomerase 6 subunit B from Arabidopsis thaliana (Mouse-ear cress).